Consider the following 139-residue polypeptide: Small ribosomal subunit protein uS12 (139 aa).

The segment at 118 to 139 (AGVANRNQSRSRYGTKKPKPKS) is disordered. Residues 130–139 (YGTKKPKPKS) show a composition bias toward basic residues.

This sequence belongs to the universal ribosomal protein uS12 family. Part of the 30S ribosomal subunit. Contacts proteins S8 and S17. May interact with IF1 in the 30S initiation complex.

In terms of biological role, with S4 and S5 plays an important role in translational accuracy. Its function is as follows. Interacts with and stabilizes bases of the 16S rRNA that are involved in tRNA selection in the A site and with the mRNA backbone. Located at the interface of the 30S and 50S subunits, it traverses the body of the 30S subunit contacting proteins on the other side and probably holding the rRNA structure together. The combined cluster of proteins S8, S12 and S17 appears to hold together the shoulder and platform of the 30S subunit. The protein is Small ribosomal subunit protein uS12 of Mycoplasma mobile (strain ATCC 43663 / 163K / NCTC 11711) (Mesomycoplasma mobile).